Reading from the N-terminus, the 174-residue chain is Crossover junction endodeoxyribonuclease RuvC (174 aa).

Residues D8, E68, and D140 contribute to the active site. Residues D8, E68, and D140 each coordinate Mg(2+).

This sequence belongs to the RuvC family. As to quaternary structure, homodimer which binds Holliday junction (HJ) DNA. The HJ becomes 2-fold symmetrical on binding to RuvC with unstacked arms; it has a different conformation from HJ DNA in complex with RuvA. In the full resolvosome a probable DNA-RuvA(4)-RuvB(12)-RuvC(2) complex forms which resolves the HJ. Mg(2+) is required as a cofactor.

It localises to the cytoplasm. The enzyme catalyses Endonucleolytic cleavage at a junction such as a reciprocal single-stranded crossover between two homologous DNA duplexes (Holliday junction).. The RuvA-RuvB-RuvC complex processes Holliday junction (HJ) DNA during genetic recombination and DNA repair. Endonuclease that resolves HJ intermediates. Cleaves cruciform DNA by making single-stranded nicks across the HJ at symmetrical positions within the homologous arms, yielding a 5'-phosphate and a 3'-hydroxyl group; requires a central core of homology in the junction. The consensus cleavage sequence is 5'-(A/T)TT(C/G)-3'. Cleavage occurs on the 3'-side of the TT dinucleotide at the point of strand exchange. HJ branch migration catalyzed by RuvA-RuvB allows RuvC to scan DNA until it finds its consensus sequence, where it cleaves and resolves the cruciform DNA. The sequence is that of Crossover junction endodeoxyribonuclease RuvC from Legionella pneumophila (strain Lens).